A 403-amino-acid chain; its full sequence is Soluble calcium-activated nucleotidase 1 (403 aa).

Residues 1–44 (MPIQPFDQREWNEPMHSLRISVGGLPVLASMTKATDPRFRPRWR) lie on the Cytoplasmic side of the membrane. A helical; Signal-anchor for type II membrane protein transmembrane segment spans residues 45 to 61 (VILTSFVGAALLWLLYS). At 62 to 403 (HHQGPVPGRP…TVKYEGIEFI (342 aa)) the chain is on the lumenal side. The N-linked (GlcNAc...) asparagine glycan is linked to N90. Ca(2+)-binding residues include S170, D171, E217, E286, S347, and E398.

It belongs to the apyrase family. Monomer. Homodimer; dimerization is Ca(2+)-dependent. The cofactor is Ca(2+).

Its subcellular location is the endoplasmic reticulum membrane. The protein resides in the golgi apparatus. The protein localises to the golgi stack membrane. It catalyses the reaction a ribonucleoside 5'-diphosphate + H2O = a ribonucleoside 5'-phosphate + phosphate + H(+). Its function is as follows. Calcium-dependent nucleotidase with a preference for UDP. The order of activity with different substrates is UDP &gt; GDP &gt; IDP &gt;&gt; UTP &gt; CDP = GTP = ITP. Has very low activity towards ADP and even lower activity towards ATP. Does not hydrolyze AMP and GMP. Involved in proteoglycan synthesis. This is Soluble calcium-activated nucleotidase 1 (Cant1) from Mus musculus (Mouse).